Consider the following 488-residue polypeptide: Dipeptide and tripeptide permease A (488 aa).

Topologically, residues 1–35 (MSTANTPEDEQKPSLNAFKQPRAFYLIFSIELWER) are cytoplasmic. A helical transmembrane segment spans residues 36–56 (FGYYGLQGIMAVYLVKMLGMS). The Periplasmic segment spans residues 57-60 (EAEA). The helical transmembrane segment at 61–81 (ITVFAAFTALVYGFVAIGGWL) threads the bilayer. The Cytoplasmic segment spans residues 82-90 (GDKILGTKR). The chain crosses the membrane as a helical span at residues 91–111 (VIVLGAIVLAIGYAMVAFSDH). Over 112–114 (DKD) the chain is Periplasmic. A helical transmembrane segment spans residues 115–135 (MIYWGLATIAVGNGLFKANPS). Residues 136-154 (SLLATCYEKDDPQLDGAFT) are Cytoplasmic-facing. A helical transmembrane segment spans residues 155-175 (MYYMSINVGSFLSMLATPWLA). Residues 176-179 (ANYG) lie on the Periplasmic side of the membrane. The chain crosses the membrane as a helical span at residues 180–200 (WDVAFALSVVGMLITLANFML). Over 201–219 (CRGWIKDKGSRPDFEPLNY) the chain is Cytoplasmic. Residues 220 to 240 (LKLLLTLVGIVALTAVSTWLL) form a helical membrane-spanning segment. A topological domain (periplasmic) is located at residue His241. The helical transmembrane segment at 242-262 (NNEVATWSLAIISLGIILIFA) threads the bilayer. Over 263-275 (RETFMMKGVARRK) the chain is Cytoplasmic. A helical transmembrane segment spans residues 276-296 (MIVAFLLMVEAVVFFVLYDQM). At 297–324 (PTSLNFFAIHNVEHAILGFSVEPEQFQS) the chain is on the periplasmic side. The chain crosses the membrane as a helical span at residues 325 to 345 (LNPFWIMLASPLLAAIYNFMG). Residues 346 to 353 (DKLPMPYK) are Cytoplasmic-facing. A helical membrane pass occupies residues 354–374 (FTVGMFLSATAFLVLPLGASM). The Periplasmic portion of the chain corresponds to 375-391 (ANEAGIVSSWWLVASYG). The helical transmembrane segment at 392–412 (FQSIGELMISGLGLAMVAQLV) threads the bilayer. Topologically, residues 413-415 (PQR) are cytoplasmic. A helical transmembrane segment spans residues 416–436 (LMGFIMGAWFLTSAAAAIIAG). The Periplasmic segment spans residues 437–460 (KVASLMAVPEDVQNAHASLEIYSS). The chain crosses the membrane as a helical span at residues 461–481 (VFLQIGIVTGVIALLMLFTAP). At 482–488 (MLSKMTQ) the chain is on the cytoplasmic side.

Belongs to the major facilitator superfamily. Proton-dependent oligopeptide transporter (POT/PTR) (TC 2.A.17) family. DtpA subfamily.

It is found in the cell inner membrane. Proton-dependent permease that transports di- and tripeptides. The protein is Dipeptide and tripeptide permease A of Proteus mirabilis (strain HI4320).